The chain runs to 318 residues: Pyrimidine-specific ribonucleoside hydrolase RihA (318 aa).

Histidine 240 is a catalytic residue.

This sequence belongs to the IUNH family. RihA subfamily.

In terms of biological role, hydrolyzes cytidine or uridine to ribose and cytosine or uracil, respectively. The polypeptide is Pyrimidine-specific ribonucleoside hydrolase RihA (Shewanella oneidensis (strain ATCC 700550 / JCM 31522 / CIP 106686 / LMG 19005 / NCIMB 14063 / MR-1)).